The following is an 849-amino-acid chain: Cytosolic phospholipase A2 zeta (849 aa).

Positions 27-145 (EKRGPLWRHW…KCGQPHKHTF (119 aa)) constitute a C2 domain. 5 residues coordinate Ca(2+): D60, D66, D116, D118, and D123. The 544-residue stretch at 306-849 (EMSSGDLDLR…RHQARERAGA (544 aa)) folds into the PLA2c domain. The active-site Nucleophile is S395. D680 acts as the Proton acceptor in catalysis.

Ca(2+) serves as cofactor. As to expression, expressed in myocardium (at protein level).

It localises to the cytoplasm. It is found in the cytosol. Its subcellular location is the cell membrane. The protein localises to the mitochondrion. The enzyme catalyses a 1,2-diacyl-sn-glycero-3-phosphocholine + H2O = a 1-acyl-sn-glycero-3-phosphocholine + a fatty acid + H(+). It catalyses the reaction a 1-O-alkyl-2-acyl-sn-glycero-3-phosphocholine + H2O = a 1-O-alkyl-sn-glycero-3-phosphocholine + a fatty acid + H(+). The catalysed reaction is 1-hexadecanoyl-2-(9Z-octadecenoyl)-sn-glycero-3-phosphocholine + H2O = 2-(9Z-octadecenoyl)-sn-glycero-3-phosphocholine + hexadecanoate + H(+). It carries out the reaction 1-hexadecanoyl-2-(9Z,12Z-octadecadienoyl)-sn-glycero-3-phosphocholine + H2O = (9Z,12Z)-octadecadienoate + 1-hexadecanoyl-sn-glycero-3-phosphocholine + H(+). The enzyme catalyses 1-hexadecanoyl-2-(5Z,8Z,11Z,14Z-eicosatetraenoyl)-sn-glycero-3-phosphocholine + H2O = 1-hexadecanoyl-sn-glycero-3-phosphocholine + (5Z,8Z,11Z,14Z)-eicosatetraenoate + H(+). It catalyses the reaction 1-hexadecanoyl-2-(9Z,12Z-octadecadienoyl)-sn-glycero-3-phosphoethanolamine + H2O = 1-hexadecanoyl-sn-glycero-3-phosphoethanolamine + (9Z,12Z)-octadecadienoate + H(+). The catalysed reaction is 1-hexadecanoyl-2-(5Z,8Z,11Z,14Z-eicosatetraenoyl)-sn-glycero-3-phosphoethanolamine + H2O = 1-hexadecanoyl-sn-glycero-3-phosphoethanolamine + (5Z,8Z,11Z,14Z)-eicosatetraenoate + H(+). It carries out the reaction 1-(5Z,8Z,11Z,14Z-eicosatetraenoyl)-2-O-hexadecyl-sn-glycero-3-phosphocholine + H2O = 2-O-hexadecyl-sn-glycero-3-phosphocholine + (5Z,8Z,11Z,14Z)-eicosatetraenoate + H(+). The enzyme catalyses 1-O-hexadecyl-2-(5Z,8Z,11Z,14Z)-eicosatetraenoyl-sn-glycero-3-phosphocholine + H2O = 1-O-hexadecyl-sn-glycero-3-phosphocholine + (5Z,8Z,11Z,14Z)-eicosatetraenoate + H(+). It catalyses the reaction 1-hexadecanoyl-sn-glycero-3-phosphocholine + H2O = sn-glycerol 3-phosphocholine + hexadecanoate + H(+). Its activity is regulated as follows. Stimulated by cytosolic Ca(2+). In terms of biological role, has calcium-dependent phospholipase and lysophospholipase activities with a potential role in membrane lipid remodeling and biosynthesis of lipid mediators. Preferentially hydrolyzes the ester bond of the fatty acyl group attached at sn-2 position of phospholipids (phospholipase A2 activity). Selectively hydrolyzes sn-2 arachidonoyl group from membrane phospholipids, providing the precursor for eicosanoid biosynthesis. In myocardial mitochondria, plays a major role in arachidonate release that is metabolically channeled to the formation of cardioprotective eicosanoids, epoxyeicosatrienoates (EETs). The sequence is that of Cytosolic phospholipase A2 zeta (PLA2G4F) from Homo sapiens (Human).